Here is a 750-residue protein sequence, read N- to C-terminus: Neprilysin (750 aa).

The segment covering 1 to 14 has biased composition (polar residues); that stretch reads MGKSESQMDITDIN. Residues 1–20 are disordered; sequence MGKSESQMDITDINTPKPKK. Residue Gly-2 is the site of N-myristoyl glycine attachment. The Cytoplasmic segment spans residues 2–28; sequence GKSESQMDITDINTPKPKKKQRWTPLE. Phosphoserine is present on residues Ser-4 and Ser-6. The Stop-transfer sequence motif lies at 16-23; that stretch reads PKPKKKQR. A helical; Signal-anchor for type II membrane protein membrane pass occupies residues 29–51; it reads ISLSVLVLLLTIIAVTMIALYAT. Over 52–750 the chain is Extracellular; the sequence is YDDGICKSSD…MNPEKKCRVW (699 aa). One can recognise a Peptidase M13 domain in the interval 56–750; that stretch reads ICKSSDCIKS…MNPEKKCRVW (695 aa). Disulfide bonds link Cys-57/Cys-62, Cys-80/Cys-735, Cys-88/Cys-695, Cys-143/Cys-411, Cys-234/Cys-242, and Cys-621/Cys-747. Arg-103 contacts a peptide. Asn-145 carries N-linked (GlcNAc...) asparagine glycosylation. Residues Asn-285, Asn-311, Asn-325, and Asn-335 are each glycosylated (N-linked (GlcNAc...) asparagine). His-584 serves as a coordination point for Zn(2+). The active site involves Glu-585. Residue His-588 participates in Zn(2+) binding. A glycan (N-linked (GlcNAc...) asparagine) is linked at Asn-628. Residue Glu-647 coordinates Zn(2+). The active-site Proton donor is Asp-651.

Belongs to the peptidase M13 family. Zn(2+) serves as cofactor. Myristoylation is a determinant of membrane targeting. Post-translationally, glycosylation at Asn-628 is necessary both for surface expression and neutral endopeptidase activity.

The protein resides in the cell membrane. The catalysed reaction is Preferential cleavage of polypeptides between hydrophobic residues, particularly with Phe or Tyr at P1'.. It catalyses the reaction substance P + H2O = substance P(1-9) + L-Leu-L-Met-NH2. It carries out the reaction substance P + H2O = substance P(1-7) + L-Phe-Gly-L-Leu-L-Met-NH2. The enzyme catalyses neurotensin + H2O = neurotensin(1-11) + L-isoleucyl-L-leucine. The catalysed reaction is neurotensin + H2O = neurotensin(1-10) + L-tyrosyl-L-isoleucyl-L-leucine. Functionally, thermolysin-like specificity, but is almost confined on acting on polypeptides of up to 30 amino acids. Biologically important in the destruction of opioid peptides such as Met- and Leu-enkephalins by cleavage of a Gly-Phe bond. Catalyzes cleavage of bradykinin, substance P and neurotensin peptides. Able to cleave angiotensin-1, angiotensin-2 and angiotensin 1-9. Involved in the degradation of atrial natriuretic factor (ANF) and brain natriuretic factor (BNP(1-32)). Displays UV-inducible elastase activity toward skin preelastic and elastic fibers. In Pongo abelii (Sumatran orangutan), this protein is Neprilysin (MME).